We begin with the raw amino-acid sequence, 162 residues long: MERFFENAMYASRWLLAPIYMGLSLALLALTIKFFQEIFHVIPNIFAMAEADLILVLLSLIDMALVGGLLVMVMISGYENFVSQLDIDEGKEKLSWLGKMDSGSLKNKVAASIVAISSIHLLRIFMDAKNVPDNKLMWYVIIHMTFVLSAFAMGYLDKQTRH.

A run of 3 helical transmembrane segments spans residues 10-32 (YASRWLLAPIYMGLSLALLALTI), 53-75 (LILVLLSLIDMALVGGLLVMVMI), and 136-156 (LMWYVIIHMTFVLSAFAMGYL).

Belongs to the UPF0114 family.

Its subcellular location is the cell membrane. This is UPF0114 protein PA4574 from Pseudomonas aeruginosa (strain ATCC 15692 / DSM 22644 / CIP 104116 / JCM 14847 / LMG 12228 / 1C / PRS 101 / PAO1).